A 315-amino-acid polypeptide reads, in one-letter code: Ribosomal RNA small subunit methyltransferase H (315 aa).

S-adenosyl-L-methionine contacts are provided by residues 37–39 (GGH), Asp-57, Phe-83, Asp-105, and Gln-112.

Belongs to the methyltransferase superfamily. RsmH family.

Its subcellular location is the cytoplasm. It carries out the reaction cytidine(1402) in 16S rRNA + S-adenosyl-L-methionine = N(4)-methylcytidine(1402) in 16S rRNA + S-adenosyl-L-homocysteine + H(+). Functionally, specifically methylates the N4 position of cytidine in position 1402 (C1402) of 16S rRNA. The chain is Ribosomal RNA small subunit methyltransferase H from Pseudomonas putida (strain W619).